The primary structure comprises 79 residues: Sulfur carrier protein TusA (79 aa).

The active-site Cysteine persulfide intermediate is C17.

This sequence belongs to the sulfur carrier protein TusA family.

It localises to the cytoplasm. Its function is as follows. Sulfur carrier protein which probably makes part of a sulfur-relay system. In Haemophilus ducreyi (strain 35000HP / ATCC 700724), this protein is Sulfur carrier protein TusA.